The following is a 538-amino-acid chain: Chaperonin GroEL (538 aa).

ATP-binding positions include 29-32 (TLGP), 86-90 (DGTTT), Gly413, 476-478 (NAA), and Asp492.

It belongs to the chaperonin (HSP60) family. As to quaternary structure, forms a cylinder of 14 subunits composed of two heptameric rings stacked back-to-back. Interacts with the co-chaperonin GroES.

It localises to the cytoplasm. It carries out the reaction ATP + H2O + a folded polypeptide = ADP + phosphate + an unfolded polypeptide.. In terms of biological role, together with its co-chaperonin GroES, plays an essential role in assisting protein folding. The GroEL-GroES system forms a nano-cage that allows encapsulation of the non-native substrate proteins and provides a physical environment optimized to promote and accelerate protein folding. The polypeptide is Chaperonin GroEL (Bacillus sp. (strain PS3)).